A 148-amino-acid polypeptide reads, in one-letter code: Ribonuclease pancreatic (148 aa).

The N-terminal stretch at 1–25 (MGLEKSLMLFPLLVLVLGLVQPSLG) is a signal peptide. Substrate is bound by residues Lys32 and Arg35. His37 functions as the Proton acceptor in the catalytic mechanism. 4 disulfide bridges follow: Cys50/Cys108, Cys64/Cys119, Cys82/Cys134, and Cys89/Cys96. Substrate-binding positions include 65 to 69 (KPVNT), Lys90, and Arg109. His143 serves as the catalytic Proton donor.

This sequence belongs to the pancreatic ribonuclease family. In terms of assembly, monomer. Interacts with and forms tight 1:1 complexes with RNH1. Dimerization of two such complexes may occur. Interaction with RNH1 inhibits this protein. Pancreas.

The protein resides in the secreted. The catalysed reaction is an [RNA] containing cytidine + H2O = an [RNA]-3'-cytidine-3'-phosphate + a 5'-hydroxy-ribonucleotide-3'-[RNA].. It catalyses the reaction an [RNA] containing uridine + H2O = an [RNA]-3'-uridine-3'-phosphate + a 5'-hydroxy-ribonucleotide-3'-[RNA].. In terms of biological role, endonuclease that catalyzes the cleavage of RNA on the 3' side of pyrimidine nucleotides. Acts on single-stranded and double-stranded RNA. In Gerbilliscus gambianus (Gambian gerbil), this protein is Ribonuclease pancreatic (RNASE1).